The chain runs to 430 residues: Glutamate-1-semialdehyde 2,1-aminomutase 2 (430 aa).

Lys269 carries the post-translational modification N6-(pyridoxal phosphate)lysine.

Belongs to the class-III pyridoxal-phosphate-dependent aminotransferase family. HemL subfamily. As to quaternary structure, homodimer. It depends on pyridoxal 5'-phosphate as a cofactor.

The protein localises to the cytoplasm. The enzyme catalyses (S)-4-amino-5-oxopentanoate = 5-aminolevulinate. It participates in porphyrin-containing compound metabolism; protoporphyrin-IX biosynthesis; 5-aminolevulinate from L-glutamyl-tRNA(Glu): step 2/2. This is Glutamate-1-semialdehyde 2,1-aminomutase 2 from Bacillus pumilus (strain SAFR-032).